The sequence spans 311 residues: Acetyl-coenzyme A carboxylase carboxyl transferase subunit beta (311 aa).

Residues 27 to 296 form the CoA carboxyltransferase N-terminal domain; sequence LWTKCGHCSA…AEAADAPEAG (270 aa). The Zn(2+) site is built by Cys31, Cys34, Cys50, and Cys53. The segment at 31–53 adopts a C4-type zinc-finger fold; sequence CGHCSAVLYRPELERNQEVCPKC. The span at 286-299 shows a compositional bias: low complexity; that stretch reads AAEAADAPEAGEQP. The disordered stretch occupies residues 286–311; it reads AAEAADAPEAGEQPSEATDPVGEHWD.

Belongs to the AccD/PCCB family. In terms of assembly, acetyl-CoA carboxylase is a heterohexamer composed of biotin carboxyl carrier protein (AccB), biotin carboxylase (AccC) and two subunits each of ACCase subunit alpha (AccA) and ACCase subunit beta (AccD). Zn(2+) is required as a cofactor.

Its subcellular location is the cytoplasm. The catalysed reaction is N(6)-carboxybiotinyl-L-lysyl-[protein] + acetyl-CoA = N(6)-biotinyl-L-lysyl-[protein] + malonyl-CoA. The protein operates within lipid metabolism; malonyl-CoA biosynthesis; malonyl-CoA from acetyl-CoA: step 1/1. In terms of biological role, component of the acetyl coenzyme A carboxylase (ACC) complex. Biotin carboxylase (BC) catalyzes the carboxylation of biotin on its carrier protein (BCCP) and then the CO(2) group is transferred by the transcarboxylase to acetyl-CoA to form malonyl-CoA. This Alkalilimnicola ehrlichii (strain ATCC BAA-1101 / DSM 17681 / MLHE-1) protein is Acetyl-coenzyme A carboxylase carboxyl transferase subunit beta.